Reading from the N-terminus, the 804-residue chain is MYNHKTVEKKWQKYWAEHDTFKTGNDPKKKNYYALDMFPFPSGKGLHVGHPEGYTATDIISRMKRAQGYNVLHPMGWDAFGLPTEQYALKTGEDPEKVTKENIANFKKQLNKLGFSYDWDREVTTSDPNYYKWTQWVFEQMYKKGLAYEAEVPVNWSPDLGTVVANEEIVDGKTERGGYPVYRRNMRQWMLKMTAYADRLLEDLDDLDWPEPVKEMQRNWIGRSEGAQVTFKVKDSDKTFDVFTTRPDTLFGVSYTVLAPESKLVQEITTPEQKAAVDSYIKKIESKSDLERTDLNKDKTGVFTGAYAINPVNGKEVPVWISDYVLASYGTGAVMAVPAHDDRDYAFATKFGLPINRVIEGGDLEKEAFTGNGKHINSDFLDGLDNEEAKKRMIEWLEDHNAGQKKVNYKLRDWDFSRQRYWGEPIPVIHWEDGTTSLVPEDELPLRLPHATDIKPSGTPESPLANLTDWVNVVDKNGRKGKRETNTMPNWAGSSWYYLRYIDPHNDKELADYDLLKKWLPVDLYIGGAEHAVRHLLYARFWHKVLYDLGVVPTKEPFQRLYNQGLILKNHEKMSKSKGNVVNPDDVIDEYGADSLRMYEMFMGPLDASIDWDDNGPASTKKFLDRVWRLFVNDLDLKAIPQERIVDKNDGELDKVYAETVKKVTEDFDALHFNTAISQMMVFINAAQKAKTIPREYAEGFVKLLAPVAPHMMEEIWQVFGHDESISYAKWPEYDPAKLVESTVEIMVQVNGKLRGKFKAAKDSAKDALEKEALSLDHVQKFLDGKDVKKVIVIPNKIVNIVAK.

Positions 39 to 50 match the 'HIGH' region motif; it reads PFPSGKGLHVGH. Residues 573–577 carry the 'KMSKS' region motif; sequence KMSKS. ATP is bound at residue Lys-576.

It belongs to the class-I aminoacyl-tRNA synthetase family.

It localises to the cytoplasm. The catalysed reaction is tRNA(Leu) + L-leucine + ATP = L-leucyl-tRNA(Leu) + AMP + diphosphate. This is Leucine--tRNA ligase from Lactobacillus gasseri (strain ATCC 33323 / DSM 20243 / BCRC 14619 / CIP 102991 / JCM 1131 / KCTC 3163 / NCIMB 11718 / NCTC 13722 / AM63).